A 429-amino-acid polypeptide reads, in one-letter code: Ribosomal RNA small subunit methyltransferase B (429 aa).

S-adenosyl-L-methionine-binding positions include 254 to 260 (CAAPGGK), Asp-277, Asp-303, and Asp-322. Cys-375 serves as the catalytic Nucleophile.

The protein belongs to the class I-like SAM-binding methyltransferase superfamily. RsmB/NOP family.

It is found in the cytoplasm. It catalyses the reaction cytidine(967) in 16S rRNA + S-adenosyl-L-methionine = 5-methylcytidine(967) in 16S rRNA + S-adenosyl-L-homocysteine + H(+). In terms of biological role, specifically methylates the cytosine at position 967 (m5C967) of 16S rRNA. This Escherichia coli (strain UTI89 / UPEC) protein is Ribosomal RNA small subunit methyltransferase B.